The primary structure comprises 430 residues: Glutamyl-tRNA reductase (430 aa).

Residues 50–53 (TCNR), serine 108, 113–115 (EPQ), and glutamine 119 contribute to the substrate site. The active-site Nucleophile is cysteine 51. 188–193 (GAGEMA) contributes to the NADP(+) binding site.

Belongs to the glutamyl-tRNA reductase family. In terms of assembly, homodimer.

It catalyses the reaction (S)-4-amino-5-oxopentanoate + tRNA(Glu) + NADP(+) = L-glutamyl-tRNA(Glu) + NADPH + H(+). The protein operates within porphyrin-containing compound metabolism; protoporphyrin-IX biosynthesis; 5-aminolevulinate from L-glutamyl-tRNA(Glu): step 1/2. Functionally, catalyzes the NADPH-dependent reduction of glutamyl-tRNA(Glu) to glutamate 1-semialdehyde (GSA). This is Glutamyl-tRNA reductase from Lawsonia intracellularis (strain PHE/MN1-00).